A 381-amino-acid polypeptide reads, in one-letter code: 4-hydroxyphenylpyruvate dioxygenase (381 aa).

VOC domains follow at residues 22 to 156 (GMDA…LVER) and 184 to 338 (AVDH…IFTK). Histidine 187, histidine 270, and glutamate 349 together coordinate Fe cation.

Belongs to the 4HPPD family. As to quaternary structure, homodimer. It depends on Fe cation as a cofactor.

The enzyme catalyses 3-(4-hydroxyphenyl)pyruvate + O2 = homogentisate + CO2. The protein operates within amino-acid degradation; L-phenylalanine degradation; acetoacetate and fumarate from L-phenylalanine: step 3/6. The protein is 4-hydroxyphenylpyruvate dioxygenase (hpd) of Streptomyces coelicolor (strain ATCC BAA-471 / A3(2) / M145).